We begin with the raw amino-acid sequence, 230 residues long: Acyl-protein thioesterase 1 (230 aa).

Residues Ser-119, Asp-174, and His-208 each act as charge relay system in the active site. Residue Lys-224 is modified to N6-acetyllysine.

The protein belongs to the AB hydrolase superfamily. AB hydrolase 2 family. Homodimer.

The protein localises to the cytoplasm. It is found in the cell membrane. Its subcellular location is the nucleus membrane. It localises to the endoplasmic reticulum. The catalysed reaction is S-hexadecanoyl-L-cysteinyl-[protein] + H2O = L-cysteinyl-[protein] + hexadecanoate + H(+). It catalyses the reaction 1-hexadecanoyl-sn-glycero-3-phosphocholine + H2O = sn-glycerol 3-phosphocholine + hexadecanoate + H(+). It carries out the reaction a 1-(9Z-octadecenoyl)-2-acyl-sn-glycero-3-phosphocholine + H2O = a 2-acyl-sn-glycero-3-phosphocholine + (9Z)-octadecenoate + H(+). Functionally, acts as an acyl-protein thioesterase. Hydrolyzes fatty acids from S-acylated cysteine residues in proteins such as trimeric G alpha proteins or HRAS. Acts as a palmitoyl thioesterase that catalyzes depalmitoylation of proteins, such as ADRB2, KCNMA1 and SQSTM1. Acts as a negative regulator of autophagy by mediating palmitoylation of SQSTM1, decreasing affinity between SQSTM1 and ATG8 proteins and recruitment of ubiquitinated cargo proteins to autophagosomes. Acts as a lysophospholipase and hydrolyzes lysophosphatidylcholine (lyso-PC). Also hydrolyzes lysophosphatidylethanolamine (lyso-PE), lysophosphatidylinositol (lyso-PI) and lysophosphatidylserine (lyso-PS). Has much higher thioesterase activity than lysophospholipase activity. Contributes to the production of lysophosphatidic acid (LPA) during blood coagulation by recognizing and cleaving plasma phospholipids to generate lysophospholipids which in turn act as substrates for ENPP2 to produce LPA. The chain is Acyl-protein thioesterase 1 (Lypla1) from Mus musculus (Mouse).